A 94-amino-acid chain; its full sequence is Putative pterin-4-alpha-carbinolamine dehydratase (94 aa).

It belongs to the pterin-4-alpha-carbinolamine dehydratase family.

The enzyme catalyses (4aS,6R)-4a-hydroxy-L-erythro-5,6,7,8-tetrahydrobiopterin = (6R)-L-erythro-6,7-dihydrobiopterin + H2O. This Mycobacterium sp. (strain KMS) protein is Putative pterin-4-alpha-carbinolamine dehydratase.